A 360-amino-acid polypeptide reads, in one-letter code: Tryptophan--tRNA ligase, mitochondrial (360 aa).

ATP-binding positions include Gln-38 and 44-47 (HLGN). A 'HIGH' region motif is present at residues 39–47 (PTGIPHLGN). Asp-168 lines the L-tryptophan pocket. ATP-binding positions include 180 to 182 (GED) and 229 to 233 (KMSKS). The span at 220–230 (IRSLREPEKKM) shows a compositional bias: basic and acidic residues. Positions 220-241 (IRSLREPEKKMSKSSGGPRSRI) are disordered. The short motif at 229 to 233 (KMSKS) is the 'KMSKS' region element.

It belongs to the class-I aminoacyl-tRNA synthetase family.

The protein resides in the mitochondrion matrix. The enzyme catalyses tRNA(Trp) + L-tryptophan + ATP = L-tryptophyl-tRNA(Trp) + AMP + diphosphate + H(+). Catalyzes the attachment of tryptophan to tRNA(Trp). The chain is Tryptophan--tRNA ligase, mitochondrial from Caenorhabditis elegans.